Reading from the N-terminus, the 145-residue chain is Large ribosomal subunit protein uL15 (145 aa).

The interval 1 to 50 (MRLNTLSPAAGSKPEKQRRGRGIGSGLGKTGGRGVKGQTSRSGGGKVRAG) is disordered. Over residues 22-35 (GIGSGLGKTGGRGV) the composition is skewed to gly residues.

It belongs to the universal ribosomal protein uL15 family. As to quaternary structure, part of the 50S ribosomal subunit.

Binds to the 23S rRNA. In Aeromonas salmonicida (strain A449), this protein is Large ribosomal subunit protein uL15.